Here is a 143-residue protein sequence, read N- to C-terminus: MIKRSITRSPSRAGQAGMSLLEIIIVIVLIGAVLTLVGSRVLGGADRGKANLAKSQIQTLAGKIENFQLDTGKLPSKLDDLVTQPGGSSGWLGPYAKPVELNDPWGHTIEYRVPGDGQAFDLISLGKDGRPGGSSYDSDIKYQ.

The propeptide at 1 to 17 is leader sequence; sequence MIKRSITRSPSRAGQAG. An N-methylmethionine modification is found at Met18. The chain crosses the membrane as a helical span at residues 18 to 38; it reads MSLLEIIIVIVLIGAVLTLVG.

It belongs to the GSP G family. Type II secretion system is composed of four main components: the outer membrane complex, the inner membrane complex, the cytoplasmic secretion ATPase and the periplasm-spanning pseudopilus. Forms homomultimers. Interacts with pseudopilin tip complex component XpsJ as well as XpsI and XcpH. Interacts with XpsN and secretin XpsD. Cleaved by the prepilin peptidase. Post-translationally, methylated by prepilin peptidase at the amino group of the N-terminal methionine once the leader sequence is cleaved.

It is found in the cell inner membrane. In terms of biological role, core component of the type II secretion system required for the energy-dependent secretion of extracellular factors such as proteases and toxins from the periplasm. Pseudopilin (pilin-like) protein that polymerizes to form the pseudopilus. Further polymerization triggers pseudopilus growth. The chain is Type II secretion system core protein G (xpsG) from Xanthomonas campestris pv. campestris (strain ATCC 33913 / DSM 3586 / NCPPB 528 / LMG 568 / P 25).